We begin with the raw amino-acid sequence, 338 residues long: Phenylalanine--tRNA ligase alpha subunit (338 aa).

A Mg(2+)-binding site is contributed by E252.

It belongs to the class-II aminoacyl-tRNA synthetase family. Phe-tRNA synthetase alpha subunit type 1 subfamily. In terms of assembly, tetramer of two alpha and two beta subunits. Requires Mg(2+) as cofactor.

The protein resides in the cytoplasm. The enzyme catalyses tRNA(Phe) + L-phenylalanine + ATP = L-phenylalanyl-tRNA(Phe) + AMP + diphosphate + H(+). The protein is Phenylalanine--tRNA ligase alpha subunit of Pseudomonas aeruginosa (strain ATCC 15692 / DSM 22644 / CIP 104116 / JCM 14847 / LMG 12228 / 1C / PRS 101 / PAO1).